A 903-amino-acid chain; its full sequence is Alanine--tRNA ligase (903 aa).

Zn(2+) is bound by residues histidine 591, histidine 595, cysteine 695, and histidine 699.

This sequence belongs to the class-II aminoacyl-tRNA synthetase family. Requires Zn(2+) as cofactor.

It is found in the cytoplasm. It carries out the reaction tRNA(Ala) + L-alanine + ATP = L-alanyl-tRNA(Ala) + AMP + diphosphate. Functionally, catalyzes the attachment of alanine to tRNA(Ala) in a two-step reaction: alanine is first activated by ATP to form Ala-AMP and then transferred to the acceptor end of tRNA(Ala). Also edits incorrectly charged Ser-tRNA(Ala) and Gly-tRNA(Ala) via its editing domain. The polypeptide is Alanine--tRNA ligase (Methanosphaera stadtmanae (strain ATCC 43021 / DSM 3091 / JCM 11832 / MCB-3)).